The following is a 362-amino-acid chain: Protein RecA (362 aa).

Residue 77–84 (GPESSGKT) coordinates ATP.

It belongs to the RecA family.

The protein localises to the cytoplasm. In terms of biological role, can catalyze the hydrolysis of ATP in the presence of single-stranded DNA, the ATP-dependent uptake of single-stranded DNA by duplex DNA, and the ATP-dependent hybridization of homologous single-stranded DNAs. It interacts with LexA causing its activation and leading to its autocatalytic cleavage. This is Protein RecA from Allorhizobium ampelinum (strain ATCC BAA-846 / DSM 112012 / S4) (Agrobacterium vitis (strain S4)).